An 883-amino-acid chain; its full sequence is Receptor-like protein 40 (883 aa).

The signal sequence occupies residues 1–21; the sequence is MSELLFSLNFLLLLLLSCVSP. Over 22–846 the chain is Extracellular; it reads SSFFTFNNPV…EDEQVLNWKA (825 aa). N58, N91, and N109 each carry an N-linked (GlcNAc...) asparagine glycan. 2 LRR repeats span residues 97–121 and 122–143; these read FHHL…KFGM and LNNL…PFSF. An N-linked (GlcNAc...) asparagine glycan is attached at N145. LRR repeat units lie at residues 146–169, 170–195, 197–219, 220–244, 246–267, 268–291, 293–316, 317–340, 342–364, 365–390, 391–412, 413–437, 439–462, and 463–486; these read LSML…ARNL, RKLR…LFEL, HIIY…EFGN, LNKL…ISNL, QLTE…VQNL, TKLS…LFTM, FLSY…SSSS, SRLE…ISKL, NLKE…LFSS, LKSL…SYIP, STLE…VFKT, LHNL…LWSL, RLSS…VLVN, and SSVQ…PLSI. N189, N207, N243, and N266 each carry an N-linked (GlcNAc...) asparagine glycan. N305 and N312 each carry an N-linked (GlcNAc...) asparagine glycan. Residue N352 is glycosylated (N-linked (GlcNAc...) asparagine). N-linked (GlcNAc...) asparagine glycosylation occurs at N462. The LRR 17; degenerate repeat unit spans residues 487-506; it reads NYFSAIDNRFGGDIPLSICN. Residues N506 and N519 are each glycosylated (N-linked (GlcNAc...) asparagine). LRR repeat units lie at residues 507 to 528, 529 to 552, 554 to 576, 578 to 600, 601 to 624, 627 to 651, 701 to 724, 725 to 747, 748 to 772, and 774 to 797; these read RSSL…PPCL, SNLL…YYED, PLRS…LINC, ALQF…LKAL, PKLQ…NEGP, FPEL…FFVN, TSSA…IGLL, KALI…SFAN, LKKM…LRTL, and FLAY…QITG. Residue N575 is glycosylated (N-linked (GlcNAc...) asparagine). A glycan (N-linked (GlcNAc...) asparagine) is linked at N731. N779 carries N-linked (GlcNAc...) asparagine glycosylation. The helical transmembrane segment at 847–867 threads the bilayer; the sequence is VAIGYGIGVLLGLAIAQLISL. At 868–883 the chain is on the cytoplasmic side; it reads YKPKWLASLVIKSRNC.

It belongs to the RLP family.

It is found in the cell membrane. This is Receptor-like protein 40 from Arabidopsis thaliana (Mouse-ear cress).